The primary structure comprises 878 residues: Leucine--tRNA ligase (878 aa).

A compositionally biased stretch (low complexity) spans 1–14 (MTASKSSSATASAS). Residues 1–23 (MTASKSSSATASASDRPDRYDPI) are disordered. The 'HIGH' region motif lies at 58–68 (PYPSGSLHMGH). The short motif at 632–636 (KMSKS) is the 'KMSKS' region element. Lysine 635 contributes to the ATP binding site.

This sequence belongs to the class-I aminoacyl-tRNA synthetase family.

Its subcellular location is the cytoplasm. It carries out the reaction tRNA(Leu) + L-leucine + ATP = L-leucyl-tRNA(Leu) + AMP + diphosphate. The protein is Leucine--tRNA ligase of Synechococcus sp. (strain WH7803).